The sequence spans 96 residues: Molybdopterin synthase sulfur carrier subunit (96 aa).

Gly96 is subject to 1-thioglycine; alternate. Gly96 is modified (glycyl adenylate; alternate).

It belongs to the MoaD family. MOCS2A subfamily. In terms of assembly, heterotetramer; composed of 2 small (MOCS2A) and 2 large (MOCS2B) subunits. Post-translationally, C-terminal thiocarboxylation occurs in 2 steps, it is first acyl-adenylated (-COAMP) via the hesA/moeB/thiF part of MOCS3, then thiocarboxylated (-COSH) via the rhodanese domain of MOCS3.

The protein resides in the cytoplasm. It functions in the pathway cofactor biosynthesis; molybdopterin biosynthesis. Acts as a sulfur carrier required for molybdopterin biosynthesis. Component of the molybdopterin synthase complex that catalyzes the conversion of precursor Z into molybdopterin by mediating the incorporation of 2 sulfur atoms into precursor Z to generate a dithiolene group. In the complex, serves as sulfur donor by being thiocarboxylated (-COSH) at its C-terminus by MOCS3. After interaction with MOCS2B, the sulfur is then transferred to precursor Z to form molybdopterin. This chain is Molybdopterin synthase sulfur carrier subunit, found in Arabidopsis thaliana (Mouse-ear cress).